The sequence spans 387 residues: Cysteine desulfurase IscS (387 aa).

Residues 73–74, N155, Q183, and 203–205 contribute to the pyridoxal 5'-phosphate site; these read AT and SAH. An N6-(pyridoxal phosphate)lysine modification is found at K206. Residue T241 participates in pyridoxal 5'-phosphate binding. Catalysis depends on C328, which acts as the Cysteine persulfide intermediate. A [2Fe-2S] cluster-binding site is contributed by C328.

It belongs to the class-V pyridoxal-phosphate-dependent aminotransferase family. NifS/IscS subfamily. In terms of assembly, homodimer. Forms a heterotetramer with IscU, interacts with other sulfur acceptors. Pyridoxal 5'-phosphate is required as a cofactor.

It localises to the cytoplasm. The catalysed reaction is (sulfur carrier)-H + L-cysteine = (sulfur carrier)-SH + L-alanine. It participates in cofactor biosynthesis; iron-sulfur cluster biosynthesis. In terms of biological role, master enzyme that delivers sulfur to a number of partners involved in Fe-S cluster assembly, tRNA modification or cofactor biosynthesis. Catalyzes the removal of elemental sulfur atoms from cysteine to produce alanine. Functions as a sulfur delivery protein for Fe-S cluster synthesis onto IscU, an Fe-S scaffold assembly protein, as well as other S acceptor proteins. This is Cysteine desulfurase IscS from Helicobacter pylori (strain ATCC 700392 / 26695) (Campylobacter pylori).